A 309-amino-acid chain; its full sequence is Putative pyridoxal kinase C6F6.11c (309 aa).

2 residues coordinate substrate: serine 12 and tyrosine 123. Residues 182–183 (SS) and 209–221 (LIPV…RGTG) each bind ATP. Aspartate 222 is a binding site for substrate.

Belongs to the pyridoxine kinase family. A divalent metal cation serves as cofactor.

The protein resides in the cytoplasm. The protein localises to the nucleus. It catalyses the reaction pyridoxal + ATP = pyridoxal 5'-phosphate + ADP + H(+). Required for synthesis of pyridoxal-5-phosphate from vitamin B6. This is Putative pyridoxal kinase C6F6.11c from Schizosaccharomyces pombe (strain 972 / ATCC 24843) (Fission yeast).